A 180-amino-acid chain; its full sequence is 5'(3')-deoxyribonucleotidase (180 aa).

D9 (nucleophile) is an active-site residue. Residues D9, D11, and D134 each contribute to the Mg(2+) site. The Proton donor role is filled by D11.

The protein belongs to the 5'(3')-deoxyribonucleotidase family. It depends on Mg(2+) as a cofactor.

Its function is as follows. Dephosphorylates nucleoside monophosphates such as the 5' and 2'(3')-phosphates of deoxyribonucleotides in vitro. The protein is 5'(3')-deoxyribonucleotidase of Clostridium acetobutylicum (strain ATCC 824 / DSM 792 / JCM 1419 / IAM 19013 / LMG 5710 / NBRC 13948 / NRRL B-527 / VKM B-1787 / 2291 / W).